A 447-amino-acid polypeptide reads, in one-letter code: Probable 7-dehydrocholesterol reductase (447 aa).

Transmembrane regions (helical) follow at residues 24–44 (LTTA…YLIT), 71–91 (IPSF…FQLI), 102–124 (FVPH…LVYY), 133–153 (IITH…PTII), 157–177 (WGSI…LAYF), 244–264 (YVSN…VDFF), 281–301 (FGWM…TLQA), and 309–329 (IDLS…GYII). Residues Lys-337, Arg-341, Ile-367, Trp-372, and 379–380 (NY) each bind NADP(+). The helical transmembrane segment at 393–413 (ACGFSHFIPYFYCVYMTILLV) threads the bilayer. NADP(+) is bound by residues Asp-419, 423–427 (CSRKY), and Tyr-434.

This sequence belongs to the ERG4/ERG24 family.

It is found in the membrane. The enzyme catalyses cholesterol + NADP(+) = 7-dehydrocholesterol + NADPH + H(+). The protein operates within steroid biosynthesis; cholesterol biosynthesis. In terms of biological role, catalyzes the last step of the cholesterol synthesis pathway, which transforms cholesta-5,7-dien-3beta-ol (7-dehydrocholesterol,7-DHC) into cholesterol by reducing the C7-C8 double bond of its sterol core. This Acanthamoeba polyphaga (Amoeba) protein is Probable 7-dehydrocholesterol reductase (DHCR7).